A 468-amino-acid polypeptide reads, in one-letter code: Adenosylhomocysteinase (468 aa).

Substrate is bound by residues Thr57, Asp132, and Glu194. 195-197 (TTT) contributes to the NAD(+) binding site. Substrate contacts are provided by Lys224 and Asp228. Residues Asn229, 258–263 (GFGDVG), Glu281, Asn316, 337–339 (IGH), and Asn382 each bind NAD(+).

It belongs to the adenosylhomocysteinase family. NAD(+) is required as a cofactor.

It localises to the cytoplasm. It carries out the reaction S-adenosyl-L-homocysteine + H2O = L-homocysteine + adenosine. The protein operates within amino-acid biosynthesis; L-homocysteine biosynthesis; L-homocysteine from S-adenosyl-L-homocysteine: step 1/1. In terms of biological role, may play a key role in the regulation of the intracellular concentration of adenosylhomocysteine. The chain is Adenosylhomocysteinase from Methylorubrum extorquens (strain CM4 / NCIMB 13688) (Methylobacterium extorquens).